The following is a 198-amino-acid chain: Cerebellin-4 (198 aa).

An N-terminal signal peptide occupies residues 1–24; it reads MGSARRALSVVPAVLLILVLPVWA. Residues Asn-26 and Asn-85 are each glycosylated (N-linked (GlcNAc...) asparagine). One can recognise a C1q domain in the interval 63-198; it reads AANSKVAFSA…TFSGFLVFPL (136 aa).

As to quaternary structure, homohexamer; disulfide-linked homotrimers. The trimers are assembled via the globular C1q domains. The trimers associate via N-terminal cysteine residues to form disulfide-linked hexamers. May form oligomers with CBLN1, CBLN2 and CBLN3 prior to secretion. Once secreted, does not interact with other CBLN family members. Strongly interacts with DCC in a NTN1-displaceable fashion. Weakly binds to NRXN1 and NRXN2 long and short isoforms produced by alternative promoter usage. Interaction with NRXN3 short isoform is hardly detectable; no interaction at all with NRXN3 long isoform. Does not interact with NEO1, GRID1 and GRID2. Sialoglycoprotein. As to expression, expressed in brain with high levels in particular thalamic nuclei. In the thalamus, predominantly expressed in neurons within the parafascicular nucleus. Found in the hippocampus, mostly in the dendrites and somata of pyramidal neurons (at protein level). Very low or no expression in most other brain regions. Highly expressed in the ventral medial habenula.

The protein localises to the secreted. The protein resides in the synapse. Functionally, acts as a synaptic organizer in specific subsets of neurons in the brain. Essential for the formation and maintenance of inhibitory GABAergic synapses. Promotes the development of dendrite-targeting inhibitory GABAergic synapses made by somatostatin-positive interneurons. May contribute to the function of ventral medial habenula region of the brain implicated in the regulation of anxiety-related behaviors. May play a role in CBLN3 export from the endoplasmic reticulum and secretion. This chain is Cerebellin-4 (Cbln4), found in Mus musculus (Mouse).